A 242-amino-acid chain; its full sequence is Uridylate kinase (242 aa).

15–18 (KLSG) serves as a coordination point for ATP. Residues 23–28 (GAEGFG) form an involved in allosteric activation by GTP region. Residue Gly-57 coordinates UMP. Residues Gly-58 and Arg-62 each coordinate ATP. Residues Asp-77 and 138–145 (TGNPFFTT) each bind UMP. 3 residues coordinate ATP: Thr-165, Tyr-171, and Asp-174.

This sequence belongs to the UMP kinase family. In terms of assembly, homohexamer.

It localises to the cytoplasm. The catalysed reaction is UMP + ATP = UDP + ADP. The protein operates within pyrimidine metabolism; CTP biosynthesis via de novo pathway; UDP from UMP (UMPK route): step 1/1. Its activity is regulated as follows. Allosterically activated by GTP. Inhibited by UTP. Catalyzes the reversible phosphorylation of UMP to UDP. The chain is Uridylate kinase from Photorhabdus laumondii subsp. laumondii (strain DSM 15139 / CIP 105565 / TT01) (Photorhabdus luminescens subsp. laumondii).